The primary structure comprises 113 residues: Ig kappa chain V-II region 26-10 (113 aa).

Residues 1–23 (DVVMTQTPLSLPVSLGDQASISC) are framework-1. A disulfide bridge connects residues cysteine 23 and cysteine 93. The interval 24–39 (RSSQSLVHSNGNTYLN) is complementarity-determining-1. The framework-2 stretch occupies residues 40–54 (WYLQKAGQSPKLLIY). Positions 55–61 (KVSNRFS) are complementarity-determining-2. The interval 62 to 93 (GVPDRFSGSGSGTDFTLKISRVEAEDLGIYFC) is framework-3. The tract at residues 94 to 102 (SQTTHVPPT) is complementarity-determining-3. Residues 103-112 (FGGGTKLEIK) are framework-4.

The chain is Ig kappa chain V-II region 26-10 from Mus musculus (Mouse).